Reading from the N-terminus, the 365-residue chain is tRNA dimethylallyltransferase (365 aa).

Position 23–30 (23–30 (APTASGKT)) interacts with ATP. Position 25-30 (25-30 (TASGKT)) interacts with substrate. Interaction with substrate tRNA regions lie at residues 48–51 (DSAL), 172–176 (QRITR), and 256–261 (RCVGYR).

This sequence belongs to the IPP transferase family. In terms of assembly, monomer. Mg(2+) serves as cofactor.

The catalysed reaction is adenosine(37) in tRNA + dimethylallyl diphosphate = N(6)-dimethylallyladenosine(37) in tRNA + diphosphate. Functionally, catalyzes the transfer of a dimethylallyl group onto the adenine at position 37 in tRNAs that read codons beginning with uridine, leading to the formation of N6-(dimethylallyl)adenosine (i(6)A). This is tRNA dimethylallyltransferase from Psychrobacter sp. (strain PRwf-1).